A 34-amino-acid chain; its full sequence is METNDLGFVASLMFILVPAIFLIVLYIGTNRSEA.

Residues 7 to 27 form a helical membrane-spanning segment; the sequence is GFVASLMFILVPAIFLIVLYI.

The protein belongs to the PsbM family. As to quaternary structure, PSII is composed of 1 copy each of membrane proteins PsbA, PsbB, PsbC, PsbD, PsbE, PsbF, PsbH, PsbI, PsbJ, PsbK, PsbL, PsbM, PsbT, PsbX, PsbY, PsbZ, Psb30/Ycf12, peripheral proteins PsbO, CyanoQ (PsbQ), PsbU, PsbV and a large number of cofactors. It forms dimeric complexes.

Its subcellular location is the cellular thylakoid membrane. Its function is as follows. One of the components of the core complex of photosystem II (PSII). PSII is a light-driven water:plastoquinone oxidoreductase that uses light energy to abstract electrons from H(2)O, generating O(2) and a proton gradient subsequently used for ATP formation. It consists of a core antenna complex that captures photons, and an electron transfer chain that converts photonic excitation into a charge separation. This subunit is found at the monomer-monomer interface. The polypeptide is Photosystem II reaction center protein M (Synechococcus sp. (strain CC9902)).